A 382-amino-acid polypeptide reads, in one-letter code: G2/mitotic-specific cyclin-B2 (382 aa).

Residues 1-12 show a composition bias toward polar residues; that stretch reads MSSVEAVTQQQL. The interval 1–78 is disordered; sequence MSSVEAVTQQ…HTSAGDPAPI (78 aa). The span at 38 to 47 shows a compositional bias: low complexity; that stretch reads NRNAAAAANR.

It belongs to the cyclin family. Cyclin AB subfamily. As to quaternary structure, interacts with the CDK1 protein kinase to form a serine/threonine kinase holoenzyme complex also known as maturation promoting factor (MPF). The cyclin subunit imparts substrate specificity to the complex.

In terms of biological role, essential for the control of the cell cycle at the G2/M (mitosis) transition. The polypeptide is G2/mitotic-specific cyclin-B2 (ccnb2) (Oryzias javanicus (Javanese ricefish)).